The primary structure comprises 123 residues: Large ribosomal subunit protein uL14 (123 aa).

Belongs to the universal ribosomal protein uL14 family. As to quaternary structure, part of the 50S ribosomal subunit. Forms a cluster with proteins L3 and L19. In the 70S ribosome, L14 and L19 interact and together make contacts with the 16S rRNA in bridges B5 and B8.

Its function is as follows. Binds to 23S rRNA. Forms part of two intersubunit bridges in the 70S ribosome. In Zymomonas mobilis subsp. mobilis (strain ATCC 31821 / ZM4 / CP4), this protein is Large ribosomal subunit protein uL14.